We begin with the raw amino-acid sequence, 418 residues long: Beta-2 adrenergic receptor (418 aa).

The Extracellular portion of the chain corresponds to 1–34 (MGQPGNRSVFLLAPNGSHAPDQDVPQERDEAWVV). 2 N-linked (GlcNAc...) asparagine glycosylation sites follow: Asn6 and Asn15. A helical membrane pass occupies residues 35 to 58 (GMAIVMSLIVLAIVFGNVLVITAI). Residues 59–71 (AKFERLQTVTNYF) are Cytoplasmic-facing. A helical membrane pass occupies residues 72–95 (ITSLACADLVMGLAVVPFGASHIL). Over 96–106 (MKMWTFGSFWC) the chain is Extracellular. Disulfide bonds link Cys106/Cys191 and Cys184/Cys190. The chain crosses the membrane as a helical span at residues 107-129 (EFWISIDVLCVTASIETLCVIAV). The Cytoplasmic segment spans residues 130–150 (DRYLAITSPFKYQCLLTKNKA). Residue Tyr141 is modified to Phosphotyrosine. A helical transmembrane segment spans residues 151 to 174 (RVVILMVWVVSGLISFLPIKMHWY). At 175 to 196 (QATHREALNCYAEEACCDFFTN) the chain is on the extracellular side. The helical transmembrane segment at 197-220 (QPYAIASSIVSFYLPLVVMVFVYS) threads the bilayer. Topologically, residues 221–274 (RVFQVARRQLQKIDKSEGRFHAQNLSQAEQDGRSGPGHRRSSKFCLKEHKALKT) are cytoplasmic. Ser246 bears the Phosphoserine mark. Residues Ser261 and Ser262 each carry the phosphoserine; by PKA modification. Cys265 carries the S-palmitoyl cysteine lipid modification. Residues 275-298 (LGIIMGTFTLCWLPFFIVNIVHGI) form a helical membrane-spanning segment. Residues 299 to 305 (HDNLIPK) are Extracellular-facing. A helical transmembrane segment spans residues 306–329 (EVYILLNWVGYVNSAFNPLIYCRS). Topologically, residues 330-418 (PDFRMAFQEL…RNCSTNDSML (89 aa)) are cytoplasmic. A lipid anchor (S-palmitoyl cysteine) is attached at Cys341. Residues Ser345 and Ser346 each carry the phosphoserine; by PKA modification. Ser355 and Ser356 each carry phosphoserine; by BARK. Residues 381–418 (RLCEDAPGPEGCAHRQGTVPDDSTDSQGRNCSTNDSML) form a disordered region. Residues Pro387 and Pro400 each carry the 4-hydroxyproline modification. Positions 405 to 418 (DSQGRNCSTNDSML) are enriched in polar residues. Residues 415–418 (DSML) carry the PDZ-binding motif.

Belongs to the G-protein coupled receptor 1 family. Adrenergic receptor subfamily. ADRB2 sub-subfamily. As to quaternary structure, binds NHERF1 and GPRASP1. Interacts with ARRB1 and ARRB2. Interacts with SRC. Interacts with USP20 and USP33. Interacts with VHL; the interaction, which is increased on hydroxylation of ADRB2, ubiquitinates ADRB2 leading to its degradation. Interacts with EGLN3; the interaction hydroxylates ADRB2 facilitating VHL-E3 ligase-mediated ubiquitination. Interacts (via PDZ-binding motif) with SNX27 (via PDZ domain); the interaction is required when endocytosed to prevent degradation in lysosomes and promote recycling to the plasma membrane. Interacts with CNIH4. Interacts with ARRDC3. Interacts with NEDD4. Interacts with MARCHF2. In terms of processing, palmitoylated; may reduce accessibility of Ser-345 and Ser-346 by anchoring Cys-341 to the plasma membrane. Agonist stimulation promotes depalmitoylation and further allows Ser-345 and Ser-346 phosphorylation. Phosphorylated by PKA and BARK upon agonist stimulation, which mediates homologous desensitization of the receptor. PKA-mediated phosphorylation seems to facilitate phosphorylation by BARK. Post-translationally, phosphorylation of Tyr-141 is induced by insulin and leads to supersensitization of the receptor. In terms of processing, polyubiquitinated. Agonist-induced ubiquitination leads to sort internalized receptors to the lysosomes for degradation. Deubiquitination by USP20 and USP33, leads to ADRB2 recycling and resensitization after prolonged agonist stimulation. USP20 and USP33 are constitutively associated and are dissociated immediately after agonist stimulation. Ubiquitination by the VHL-E3 ligase complex is oxygen-dependent. Hydroxylation by EGLN3 occurs only under normoxia and increases the interaction with VHL and the subsequent ubiquitination and degradation of ADRB2. Post-translationally, palmitoylated. Mainly palmitoylated at Cys-341. Palmitoylation may reduce accessibility of phosphorylation sites by anchoring the receptor to the plasma membrane. Agonist stimulation promotes depalmitoylation and further allows Ser-345 and Ser-346 phosphorylation. Also undergoes transient, ligand-induced palmitoylation at Cys-265 probably by ZDHHC9, ZDHHC14 and ZDHHC18 within the Golgi. Palmitoylation at Cys-265 requires phosphorylation by PKA and receptor internalization and stabilizes the receptor. Could be depalmitoylated by LYPLA1 at the plasma membrane. Expressed in heart, liver, lung, skeletal muscle and subcutaneous adipose tissue.

It localises to the cell membrane. Its subcellular location is the early endosome. It is found in the golgi apparatus. In terms of biological role, beta-adrenergic receptors mediate the catecholamine-induced activation of adenylate cyclase through the action of G proteins. The beta-2-adrenergic receptor binds epinephrine with an approximately 30-fold greater affinity than it does norepinephrine. The chain is Beta-2 adrenergic receptor (ADRB2) from Sus scrofa (Pig).